The following is a 347-amino-acid chain: Phosphate acyltransferase (347 aa).

It belongs to the PlsX family. Homodimer. Probably interacts with PlsY.

It localises to the cytoplasm. It catalyses the reaction a fatty acyl-[ACP] + phosphate = an acyl phosphate + holo-[ACP]. The protein operates within lipid metabolism; phospholipid metabolism. Catalyzes the reversible formation of acyl-phosphate (acyl-PO(4)) from acyl-[acyl-carrier-protein] (acyl-ACP). This enzyme utilizes acyl-ACP as fatty acyl donor, but not acyl-CoA. The sequence is that of Phosphate acyltransferase from Methylobacillus flagellatus (strain ATCC 51484 / DSM 6875 / VKM B-1610 / KT).